The primary structure comprises 486 residues: Transcriptional adapter 2-beta (486 aa).

The segment at 4–59 (LGKKYCVNCLADVTNLRIRCAECQDIELCPECFSAGAEIGNHRRWHGYQQVDGGRF) adopts a ZZ-type zinc-finger fold. Zn(2+) is bound by residues Cys9, Cys12, Cys23, Cys26, Cys32, Cys35, His45, and His49. The SANT domain occupies 65–118 (EAEGGWTSREEQSLLDAIEQYGFGNWEDMAAHVGASRTPQEVMDHYVSMYIHGN). 2 disordered regions span residues 237–291 (KKDK…EKGQ) and 343–377 (EYEA…TAGL). Gly residues-rich tracts occupy residues 247–262 (GTVG…GSGS) and 367–377 (SSGGGGGTAGL).

It localises to the nucleus. Functionally, transcriptional coactivator. The sequence is that of Transcriptional adapter 2-beta (tada2b) from Danio rerio (Zebrafish).